The primary structure comprises 294 residues: Protoheme IX farnesyltransferase (294 aa).

A run of 9 helical transmembrane segments spans residues 25-45, 48-68, 92-112, 115-135, 141-161, 170-190, 216-236, 240-260, and 272-292; these read SLVL…MGAV, LVTL…NCYW, AVAL…LALG, VLTA…YTPL, AAML…WTAV, FSLF…IALF, VVLY…LHIA, YLAA…WGFF, and FFFS…DRVP.

This sequence belongs to the UbiA prenyltransferase family. Protoheme IX farnesyltransferase subfamily.

It is found in the cell inner membrane. The catalysed reaction is heme b + (2E,6E)-farnesyl diphosphate + H2O = Fe(II)-heme o + diphosphate. It participates in porphyrin-containing compound metabolism; heme O biosynthesis; heme O from protoheme: step 1/1. In terms of biological role, converts heme B (protoheme IX) to heme O by substitution of the vinyl group on carbon 2 of heme B porphyrin ring with a hydroxyethyl farnesyl side group. The protein is Protoheme IX farnesyltransferase of Myxococcus xanthus (strain DK1622).